We begin with the raw amino-acid sequence, 167 residues long: Bacterial non-heme ferritin-like protein (167 aa).

One can recognise a Ferritin-like diiron domain in the interval 1-145 (MATAGMLLKL…TILDEVRSAK (145 aa)).

The protein belongs to the ferritin family. Prokaryotic subfamily.

The protein localises to the cytoplasm. This Escherichia coli O157:H7 protein is Bacterial non-heme ferritin-like protein (ftnB).